Reading from the N-terminus, the 140-residue chain is Pro-variola growth factor (140 aa).

Residues 1–18 (MSMKYLMLLFAAMIIRSF) form the signal peptide. At 19–100 (ANSGNAIETT…SEKPNTTTSY (82 aa)) the chain is on the extracellular side. N-linked (GlcNAc...) asparagine; by host glycosylation is present at Asn34. Positions 41–81 (AIRLCGPEGDRYCFHGICIHARDIDGMYCRCSHGYTGIRCQ) constitute an EGF-like domain. 3 disulfide bridges follow: Cys45–Cys58, Cys53–Cys69, and Cys71–Cys80. A glycan (N-linked (GlcNAc...) asparagine; by host) is linked at Asn95. Residues 101–121 (IPSPGIVLVLLVSIIVCCLLF) traverse the membrane as a helical segment. Topologically, residues 122–140 (VYRFTRRTNKLPLQDMVVP) are cytoplasmic.

Belongs to the orthopoxvirus OPG019 family. In terms of assembly, variola growth factor interacts with host EGFR and promotes EGFR dimerization.

The protein localises to the host membrane. Its subcellular location is the secreted. Stimulates cellular proliferation (hyperplasia)and mobility around infected cells to promote rapid and efficient spread of infection. This effect is beneficial for virus replication in vivo, because poxviruses replicate possibly better in proliferating cells than in quiescent cells. Acts by binding host EGFR, inducing its dimerization, autophosphorylation and leading to activation of several cellular pathways regulating cell proliferation or cell survival. The activation by host EGFR of mitogen activated protein kinases (MAPK) and extracellular-signal regulated kinases (ERK) are essential for the positive effect of vaccinia growth factor on poxvirus virulence in vivo. This is Pro-variola growth factor (OPG019) from Variola virus (isolate Human/India/Ind3/1967) (VARV).